A 158-amino-acid polypeptide reads, in one-letter code: S-ribosylhomocysteine lyase (158 aa).

3 residues coordinate Fe cation: His-57, His-61, and Cys-125.

It belongs to the LuxS family. As to quaternary structure, homodimer. The cofactor is Fe cation.

It carries out the reaction S-(5-deoxy-D-ribos-5-yl)-L-homocysteine = (S)-4,5-dihydroxypentane-2,3-dione + L-homocysteine. Its function is as follows. Involved in the synthesis of autoinducer 2 (AI-2) which is secreted by bacteria and is used to communicate both the cell density and the metabolic potential of the environment. The regulation of gene expression in response to changes in cell density is called quorum sensing. Catalyzes the transformation of S-ribosylhomocysteine (RHC) to homocysteine (HC) and 4,5-dihydroxy-2,3-pentadione (DPD). The polypeptide is S-ribosylhomocysteine lyase (Deinococcus radiodurans (strain ATCC 13939 / DSM 20539 / JCM 16871 / CCUG 27074 / LMG 4051 / NBRC 15346 / NCIMB 9279 / VKM B-1422 / R1)).